Reading from the N-terminus, the 204-residue chain is MPTPTKGARLGGSPAHERLLLANLATALFEHGGITTTEAKAKRLRPYAERLVTFAKRGDLHARRRVMRHVRDNSVVHTLFTEIGPRYANRDGGYTRIIKLGNRKGDNAPLARIELVEALTVGQQAVGEAERARGTRFSERRKPTGATAEAAEDLASESPTAAAVAAQSAEEQAPVEETLTAQAAETSAATVEETDDDGPAESKS.

The tract at residues 124-204 is disordered; the sequence is QAVGEAERAR…DDDGPAESKS (81 aa). The span at 128–142 shows a compositional bias: basic and acidic residues; the sequence is EAERARGTRFSERRK. Over residues 156 to 191 the composition is skewed to low complexity; that stretch reads SESPTAAAVAAQSAEEQAPVEETLTAQAAETSAATV. Residues 192 to 204 are compositionally biased toward acidic residues; the sequence is EETDDDGPAESKS.

The protein belongs to the bacterial ribosomal protein bL17 family. In terms of assembly, part of the 50S ribosomal subunit. Contacts protein L32.

This is Large ribosomal subunit protein bL17 from Frankia alni (strain DSM 45986 / CECT 9034 / ACN14a).